The chain runs to 508 residues: Anthranilate synthase component 1 (508 aa).

Residues S51 and 283 to 285 (PYM) contribute to the L-tryptophan site. 323-324 (GT) contributes to the chorismate binding site. E350 serves as a coordination point for Mg(2+). Chorismate contacts are provided by residues Y438, R458, 477–479 (GAG), and G479. E492 contributes to the Mg(2+) binding site.

It belongs to the anthranilate synthase component I family. Heterotetramer consisting of two non-identical subunits: a beta subunit (TrpG) and a large alpha subunit (TrpE). It depends on Mg(2+) as a cofactor.

It catalyses the reaction chorismate + L-glutamine = anthranilate + pyruvate + L-glutamate + H(+). It functions in the pathway amino-acid biosynthesis; L-tryptophan biosynthesis; L-tryptophan from chorismate: step 1/5. Its activity is regulated as follows. Feedback inhibited by tryptophan. Part of a heterotetrameric complex that catalyzes the two-step biosynthesis of anthranilate, an intermediate in the biosynthesis of L-tryptophan. In the first step, the glutamine-binding beta subunit (TrpG) of anthranilate synthase (AS) provides the glutamine amidotransferase activity which generates ammonia as a substrate that, along with chorismate, is used in the second step, catalyzed by the large alpha subunit of AS (TrpE) to produce anthranilate. In the absence of TrpG, TrpE can synthesize anthranilate directly from chorismate and high concentrations of ammonia. The protein is Anthranilate synthase component 1 (trpE) of Synechocystis sp. (strain ATCC 27184 / PCC 6803 / Kazusa).